The primary structure comprises 307 residues: 4-diphosphocytidyl-2-C-methyl-D-erythritol kinase (307 aa).

Residue K16 is part of the active site. Residue 101–111 (PVAGGMAGGSA) coordinates ATP. The active site involves D143.

It belongs to the GHMP kinase family. IspE subfamily.

It carries out the reaction 4-CDP-2-C-methyl-D-erythritol + ATP = 4-CDP-2-C-methyl-D-erythritol 2-phosphate + ADP + H(+). It participates in isoprenoid biosynthesis; isopentenyl diphosphate biosynthesis via DXP pathway; isopentenyl diphosphate from 1-deoxy-D-xylulose 5-phosphate: step 3/6. In terms of biological role, catalyzes the phosphorylation of the position 2 hydroxy group of 4-diphosphocytidyl-2C-methyl-D-erythritol. The sequence is that of 4-diphosphocytidyl-2-C-methyl-D-erythritol kinase from Nocardia farcinica (strain IFM 10152).